The following is a 799-amino-acid chain: Leucine--tRNA ligase (799 aa).

A 'HIGH' region motif is present at residues 39 to 50; sequence PYPSGAGLHMGH. Residues 575–579 carry the 'KMSKS' region motif; sequence KMSKS. Residue lysine 578 participates in ATP binding.

It belongs to the class-I aminoacyl-tRNA synthetase family.

The protein resides in the cytoplasm. The catalysed reaction is tRNA(Leu) + L-leucine + ATP = L-leucyl-tRNA(Leu) + AMP + diphosphate. The polypeptide is Leucine--tRNA ligase (Malacoplasma penetrans (strain HF-2) (Mycoplasma penetrans)).